The sequence spans 273 residues: Exosome complex component MTR3 (273 aa).

The disordered stretch occupies residues 1-36 (MPGDHRRIRGPEESQPPQLYAAEDDETPAARDPTRL).

This sequence belongs to the RNase PH family. In terms of assembly, component of the RNA exosome core complex (Exo-9), composed of EXOSC1, EXOSC2, EXOSC3, EXOSC4, EXOSC5, EXOSC6, EXOSC7, EXOSC8 and EXOSC9; within the complex interacts with EXOSC1, EXOSC7 and EXOSC8. The catalytically inactive RNA exosome core complex (Exo-9) associates with the catalytic subunit EXOSC10/RRP6. Exo-9 may associate with DIS3 to form the nucleolar exosome complex, or DIS3L to form the cytoplasmic exosome complex. Exo-9 is formed by a hexameric base ring consisting of the heterodimers EXOSC4-EXOSC9, EXOSC5-EXOSC8 and EXOSC6-EXOSC7, and a cap ring consisting of EXOSC1, EXOSC2 and EXOSC3. The RNA exosome complex associates with cofactors EXOSC10/RRP6, C1D/RRP47, MPHOSPH6/MPP6 and MTREX/MTR4.

The protein localises to the cytoplasm. The protein resides in the nucleus. Its subcellular location is the nucleolus. Functionally, non-catalytic component of the RNA exosome complex which has 3'-&gt;5' exoribonuclease activity and participates in a multitude of cellular RNA processing and degradation events. In the nucleus, the RNA exosome complex is involved in proper maturation of stable RNA species such as rRNA, snRNA and snoRNA, in the elimination of RNA processing by-products and non-coding 'pervasive' transcripts, such as antisense RNA species and promoter-upstream transcripts (PROMPTs), and of mRNAs with processing defects, thereby limiting or excluding their export to the cytoplasm. The RNA exosome may be involved in Ig class switch recombination (CSR) and/or Ig variable region somatic hypermutation (SHM) by targeting AICDA deamination activity to transcribed dsDNA substrates. In the cytoplasm, the RNA exosome complex is involved in general mRNA turnover and specifically degrades inherently unstable mRNAs containing AU-rich elements (AREs) within their 3' untranslated regions, and in RNA surveillance pathways, preventing translation of aberrant mRNAs. It seems to be involved in degradation of histone mRNA. The catalytic inactive RNA exosome core complex of 9 subunits (Exo-9) is proposed to play a pivotal role in the binding and presentation of RNA for ribonucleolysis, and to serve as a scaffold for the association with catalytic subunits and accessory proteins or complexes. This chain is Exosome complex component MTR3 (Exosc6), found in Mus musculus (Mouse).